We begin with the raw amino-acid sequence, 80 residues long: Putative defensin-like protein 23 (80 aa).

Residues 1–25 form the signal peptide; that stretch reads MTTTMKIMSFAMLLVLLFSIDVVEG. Cystine bridges form between Cys-31/Cys-80, Cys-41/Cys-66, Cys-50/Cys-76, and Cys-54/Cys-78.

It belongs to the DEFL family.

It localises to the secreted. This chain is Putative defensin-like protein 23, found in Arabidopsis thaliana (Mouse-ear cress).